We begin with the raw amino-acid sequence, 286 residues long: Phosphatidylserine decarboxylase proenzyme (286 aa).

Active-site charge relay system; for autoendoproteolytic cleavage activity residues include aspartate 90, histidine 147, and serine 252. The active-site Schiff-base intermediate with substrate; via pyruvic acid; for decarboxylase activity is the serine 252. Serine 252 carries the post-translational modification Pyruvic acid (Ser); by autocatalysis.

This sequence belongs to the phosphatidylserine decarboxylase family. PSD-B subfamily. Prokaryotic type I sub-subfamily. As to quaternary structure, heterodimer of a large membrane-associated beta subunit and a small pyruvoyl-containing alpha subunit. Requires pyruvate as cofactor. Is synthesized initially as an inactive proenzyme. Formation of the active enzyme involves a self-maturation process in which the active site pyruvoyl group is generated from an internal serine residue via an autocatalytic post-translational modification. Two non-identical subunits are generated from the proenzyme in this reaction, and the pyruvate is formed at the N-terminus of the alpha chain, which is derived from the carboxyl end of the proenzyme. The autoendoproteolytic cleavage occurs by a canonical serine protease mechanism, in which the side chain hydroxyl group of the serine supplies its oxygen atom to form the C-terminus of the beta chain, while the remainder of the serine residue undergoes an oxidative deamination to produce ammonia and the pyruvoyl prosthetic group on the alpha chain. During this reaction, the Ser that is part of the protease active site of the proenzyme becomes the pyruvoyl prosthetic group, which constitutes an essential element of the active site of the mature decarboxylase.

It is found in the cell membrane. The catalysed reaction is a 1,2-diacyl-sn-glycero-3-phospho-L-serine + H(+) = a 1,2-diacyl-sn-glycero-3-phosphoethanolamine + CO2. It participates in phospholipid metabolism; phosphatidylethanolamine biosynthesis; phosphatidylethanolamine from CDP-diacylglycerol: step 2/2. Its function is as follows. Catalyzes the formation of phosphatidylethanolamine (PtdEtn) from phosphatidylserine (PtdSer). This Azotobacter vinelandii (strain DJ / ATCC BAA-1303) protein is Phosphatidylserine decarboxylase proenzyme.